Consider the following 500-residue polypeptide: Putative antiporter subunit mnhD2 (500 aa).

14 consecutive transmembrane segments (helical) span residues 2–22 (MSNL…ILVF), 32–52 (ILSI…LIYV), 78–98 (LSLL…AYGF), 108–128 (FHLP…FLTS), 130–150 (LFNL…LVTL), 161–181 (IVYV…IGML), 209–229 (ISLV…FMWL), 240–260 (LAAL…IRFF), 273–293 (TLLV…VIAY), 308–328 (IGFI…GAIF), 330–350 (LAND…LVYM), 368–388 (FFGV…PFSG), 403–423 (GNYI…YSLF), and 450–470 (GLLS…PVVL).

It belongs to the CPA3 antiporters (TC 2.A.63) subunit D family. May form a heterooligomeric complex that consists of seven subunits: mnhA2, mnhB2, mnhC2, mnhD2, mnhE2, mnhF2 and mnhG2.

The protein resides in the cell membrane. The polypeptide is Putative antiporter subunit mnhD2 (mnhD2) (Staphylococcus epidermidis (strain ATCC 12228 / FDA PCI 1200)).